The sequence spans 162 residues: uncharacterized protein (162 aa).

This is an uncharacterized protein from Aedes vexans (Inland floodwater mosquito).